Here is a 235-residue protein sequence, read N- to C-terminus: Ion-translocating oxidoreductase complex subunit E (235 aa).

5 consecutive transmembrane segments (helical) span residues 63-83 (LGLG…ISLF), 93-113 (IPIY…LMNA), 117-137 (TLYQ…IIIG), 152-172 (IWDG…LGAL), and 206-226 (SFLL…LLAI).

This sequence belongs to the NqrDE/RnfAE family. The complex is composed of six subunits: RnfA, RnfB, RnfC, RnfD, RnfE and RnfG.

It localises to the cell inner membrane. Functionally, part of a membrane-bound complex that couples electron transfer with translocation of ions across the membrane. This Haemophilus influenzae (strain 86-028NP) protein is Ion-translocating oxidoreductase complex subunit E.